Reading from the N-terminus, the 1456-residue chain is MAENEKVTYGGALPPSPSTADTEVAALARSMTNASRSSVYSPEKPDGTNPFLGTDDPRMDPLSGKFEPERWTKAILQLQSSDPEGYPHHTAAVSFSDLSVYGYGRPTDHQKTVGNYFLDIPGLARDILGRKGQRIDILRNFEGVIRESEMLVVLGRPGSGCTTLLKTIAGETHGFWITDNSHINYQGISFKRMHKQFRGEVIYNAENDVHFPNMTVGQTLRFAAEARTPRTRLPGVSRSQWAEHMKDVVMSIFGLTHTVNTKVGNDFVRGVSGGERKRVSIAEVALSGSPLQCWDNSTRGLDSATALEFVKSLRLSSKYAGATAVVAIYQASQAIYDLFDKVVVLYEGQQIYFGRADRAKQFFIDMGFECPPRQTTADFLTSLTNPGECLPRPGFEGRVPRTADEFAAAWRNSRDRQELLQEIERFNDEFPEDGEHLEKFKKARKLIQAKGSQSPYTLSTPMQIRLCLKRAWQRFMADTSNFLTSVIGNFILALIISSIFYNLPQNTLSFYSRGALLFFAILMNAFASSLEILQIYEQRPIVEKHKRMALYHPYADAIASVLCDLPGKVIASFAFNLVLYFMTNLRRTPGAFFTFYLFSLMCILVMSMIFRTIGATSKTISQAMAPSSVILLALVIFTGFTIPTRDMLGWSRWINYINPIGYAFESIMVNEFDGREYACGDFIPTGPGYTDVPATSRVCASAGAVFGSDVVEGAAYIATAYEYFPQHKWRNLGILFGFIAFFACTYLFATEFIAASKSKGEVLVFRRGHVPLKKEGASEDEEAGTGSTGTRTQEEPVDKDANIAGIQRQVATFHWEDVIYDIKIKGQPRRILDHVDGWVRPGTLTALMGASGAGKTTLLDTLANRVTMGVVEGKMQVDGHDRDSSFQRNTGYVQQQDLHLQTSTVREAMLFSARLRQPHTVPDAEKAAYVEEVIHLLEMQKYADAIVGVPGEGLNVEQRKRLTIGVELVAKPQLLLFLDEPTSGLDSQTAWSICTLLRKLANNGQAILCTIHQPSAMLFQSFDRLLLLQRGGQTVYFGDIGENSRTIIDYFEGQGADPCPHSANPAEWMLSVIGAAPGAVAKRDYYEAWRGSEAYRAVKEELRQMRENPKPISQESTDALRVYAAPFHVQLFHVTFRFYQQLYRTPSYIYSKIFLVAGSNLLIGFSFFNAHNTIQGLQNQMYSVFMGLTVFGNLVNQIMPHFVTQRSLYEVRERPSRAYSWVVFMLSNVLGELPWNTLAGVVLFFCWYYPVGMYRNAEVTHAVTERGGLMFLLIWQFMLFTSTFAHMLIAGVDSDVTGGNIASLLFSLTFLFCGVLAGPSGPNAFPRFWIFMYRLSPFTYLVEAMVSVGVANAPAFCSDIEVRHFEPPSGETCGQYLQQYMSVNDGSLANPNATADCQFCQQTTTNSFLTGIHSSYAHRWRNFGFLWVFILFNIGMAVFFYWLARVPKGSRVKKQK.

The interval 1–65 is disordered; the sequence is MAENEKVTYG…DPRMDPLSGK (65 aa). Polar residues predominate over residues 30–40; it reads SMTNASRSSVY. An ABC transporter 1 domain is found at 118-372; it reads LDIPGLARDI…FIDMGFECPP (255 aa). 6 helical membrane-spanning segments follow: residues 481-501, 515-535, 561-581, 590-610, 623-643, and 734-754; these read NFLTSVIGNFILALIISSIFY, ALLFFAILMNAFASSLEILQI, VLCDLPGKVIASFAFNLVLYF, GAFFTFYLFSLMCILVMSMIF, AMAPSSVILLALVIFTGFTIP, and ILFGFIAFFACTYLFATEFIA. Residues 775 to 799 form a disordered region; that stretch reads EGASEDEEAGTGSTGTRTQEEPVDK. The ABC transporter 2 domain occupies 813–1056; sequence FHWEDVIYDI…IIDYFEGQGA (244 aa). 849–856 contributes to the ATP binding site; it reads GASGAGKT. 7 consecutive transmembrane segments (helical) span residues 1148–1168, 1184–1204, 1233–1253, 1269–1289, 1301–1321, 1337–1357, and 1423–1443; these read YIYSKIFLVAGSNLLIGFSFF, VFMGLTVFGNLVNQIMPHFVT, LPWNTLAGVVLFFCWYYPVGM, LMFLLIWQFMLFTSTFAHMLI, IASLLFSLTFLFCGVLAGPSG, PFTYLVEAMVSVGVANAPAFC, and FGFLWVFILFNIGMAVFFYWL.

The protein belongs to the ABC transporter superfamily. ABCG family. PDR (TC 3.A.1.205) subfamily.

It is found in the membrane. In terms of biological role, ABC-type transporter; part of the gene cluster that mediates the biosynthesis of erinacines, cyathane-xylosides that show unique biological activities, including leishmanicidal activity, stimulating activity for nerve growth-factor synthesis, and agonistic activity toward the kappa opioid receptor. The polypeptide is ABC-type transporter eriD (Hericium erinaceus (Lion's mane mushroom)).